The following is a 116-amino-acid chain: MQPGGQPNMQQIMEQAQKMQQQLMTAQQELAEAEVSGSAGGGLVTAVVSGSGELKSVAIDPKAVDPDDTDTLSDLVVAAVRDANRAAQELQQEKMGPVTGALGGGQGLGGLGLPGL.

Positions 90-116 are disordered; sequence LQQEKMGPVTGALGGGQGLGGLGLPGL. Over residues 101–116 the composition is skewed to gly residues; sequence ALGGGQGLGGLGLPGL.

Belongs to the YbaB/EbfC family. Homodimer.

The protein resides in the cytoplasm. Its subcellular location is the nucleoid. Binds to DNA and alters its conformation. May be involved in regulation of gene expression, nucleoid organization and DNA protection. The polypeptide is Nucleoid-associated protein SACE_0254 (Saccharopolyspora erythraea (strain ATCC 11635 / DSM 40517 / JCM 4748 / NBRC 13426 / NCIMB 8594 / NRRL 2338)).